Consider the following 186-residue polypeptide: Ribosome-recycling factor (186 aa).

Belongs to the RRF family.

It localises to the cytoplasm. In terms of biological role, responsible for the release of ribosomes from messenger RNA at the termination of protein biosynthesis. May increase the efficiency of translation by recycling ribosomes from one round of translation to another. This chain is Ribosome-recycling factor, found in Rickettsia bellii (strain OSU 85-389).